The primary structure comprises 232 residues: Orotidine 5'-phosphate decarboxylase (232 aa).

Substrate is bound by residues aspartate 12, lysine 34, 61 to 70 (DMKLLDIDNT), threonine 116, arginine 177, glutamine 186, glycine 206, and arginine 207. The active-site Proton donor is the lysine 63.

Belongs to the OMP decarboxylase family. Type 1 subfamily. As to quaternary structure, homodimer.

The enzyme catalyses orotidine 5'-phosphate + H(+) = UMP + CO2. Its pathway is pyrimidine metabolism; UMP biosynthesis via de novo pathway; UMP from orotate: step 2/2. In terms of biological role, catalyzes the decarboxylation of orotidine 5'-monophosphate (OMP) to uridine 5'-monophosphate (UMP). The chain is Orotidine 5'-phosphate decarboxylase from Sinorhizobium medicae (strain WSM419) (Ensifer medicae).